A 376-amino-acid polypeptide reads, in one-letter code: Queuine tRNA-ribosyltransferase (376 aa).

Catalysis depends on aspartate 93, which acts as the Proton acceptor. Residues 93–97 (DSGGF), aspartate 147, glutamine 190, and glycine 217 contribute to the substrate site. The interval 248 to 254 (GVGTPDD) is RNA binding. Aspartate 267 functions as the Nucleophile in the catalytic mechanism. An RNA binding; important for wobble base 34 recognition region spans residues 272-276 (TRSGR).

It belongs to the queuine tRNA-ribosyltransferase family. Homodimer. Within each dimer, one monomer is responsible for RNA recognition and catalysis, while the other monomer binds to the replacement base PreQ1.

The enzyme catalyses 7-aminomethyl-7-carbaguanine + guanosine(34) in tRNA = 7-aminomethyl-7-carbaguanosine(34) in tRNA + guanine. It participates in tRNA modification; tRNA-queuosine biosynthesis. Its function is as follows. Catalyzes the base-exchange of a guanine (G) residue with the queuine precursor 7-aminomethyl-7-deazaguanine (PreQ1) at position 34 (anticodon wobble position) in tRNAs with GU(N) anticodons (tRNA-Asp, -Asn, -His and -Tyr). Catalysis occurs through a double-displacement mechanism. The nucleophile active site attacks the C1' of nucleotide 34 to detach the guanine base from the RNA, forming a covalent enzyme-RNA intermediate. The proton acceptor active site deprotonates the incoming PreQ1, allowing a nucleophilic attack on the C1' of the ribose to form the product. After dissociation, two additional enzymatic reactions on the tRNA convert PreQ1 to queuine (Q), resulting in the hypermodified nucleoside queuosine (7-(((4,5-cis-dihydroxy-2-cyclopenten-1-yl)amino)methyl)-7-deazaguanosine). This is Queuine tRNA-ribosyltransferase from Rhizobium meliloti (strain 1021) (Ensifer meliloti).